An 85-amino-acid chain; its full sequence is uncharacterized protein (85 aa).

The next 2 helical transmembrane spans lie at 14–34 (FLFG…RATI) and 60–80 (IFVY…IYFL).

Its subcellular location is the cell membrane. This is an uncharacterized protein from Escherichia coli O157:H7.